Here is a 340-residue protein sequence, read N- to C-terminus: Phosphoribosylformylglycinamidine cyclo-ligase (340 aa).

The protein belongs to the AIR synthase family.

The protein localises to the cytoplasm. The catalysed reaction is 2-formamido-N(1)-(5-O-phospho-beta-D-ribosyl)acetamidine + ATP = 5-amino-1-(5-phospho-beta-D-ribosyl)imidazole + ADP + phosphate + H(+). Its pathway is purine metabolism; IMP biosynthesis via de novo pathway; 5-amino-1-(5-phospho-D-ribosyl)imidazole from N(2)-formyl-N(1)-(5-phospho-D-ribosyl)glycinamide: step 2/2. The polypeptide is Phosphoribosylformylglycinamidine cyclo-ligase (Streptococcus pyogenes serotype M6 (strain ATCC BAA-946 / MGAS10394)).